Here is a 546-residue protein sequence, read N- to C-terminus: Chaperonin GroEL (546 aa).

ATP is bound by residues 29-32 (TLGP), 86-90 (DGTTT), Gly-413, 476-478 (NAA), and Asp-492. The tract at residues 521–546 (RPDESGNDAGAGAQGMDPSMMGGGMM) is disordered.

The protein belongs to the chaperonin (HSP60) family. In terms of assembly, forms a cylinder of 14 subunits composed of two heptameric rings stacked back-to-back. Interacts with the co-chaperonin GroES.

It is found in the cytoplasm. The enzyme catalyses ATP + H2O + a folded polypeptide = ADP + phosphate + an unfolded polypeptide.. Together with its co-chaperonin GroES, plays an essential role in assisting protein folding. The GroEL-GroES system forms a nano-cage that allows encapsulation of the non-native substrate proteins and provides a physical environment optimized to promote and accelerate protein folding. The polypeptide is Chaperonin GroEL (Tetragenococcus halophilus (Pediococcus halophilus)).